The following is a 294-amino-acid chain: Cytidine deaminase (294 aa).

CMP/dCMP-type deaminase domains follow at residues 48–168 (DEDA…FGPK) and 186–294 (LEGD…VLLG). 89–91 (NME) is a substrate binding site. His-102 is a binding site for Zn(2+). Catalysis depends on Glu-104, which acts as the Proton donor. Residues Cys-129 and Cys-132 each coordinate Zn(2+).

Belongs to the cytidine and deoxycytidylate deaminase family. Homodimer. It depends on Zn(2+) as a cofactor.

The enzyme catalyses cytidine + H2O + H(+) = uridine + NH4(+). The catalysed reaction is 2'-deoxycytidine + H2O + H(+) = 2'-deoxyuridine + NH4(+). This enzyme scavenges exogenous and endogenous cytidine and 2'-deoxycytidine for UMP synthesis. The sequence is that of Cytidine deaminase from Citrobacter koseri (strain ATCC BAA-895 / CDC 4225-83 / SGSC4696).